The following is a 141-amino-acid chain: Nucleoside triphosphatase NudI (141 aa).

Residues 1 to 141 form the Nudix hydrolase domain; that stretch reads MRQRTIVCPL…RHTLALKGLL (141 aa). Positions 38–59 match the Nudix box motif; it reads GGVEPGERIEEALRREVREELG.

The protein belongs to the Nudix hydrolase family. NudI subfamily. In terms of assembly, monomer. Mg(2+) is required as a cofactor.

The catalysed reaction is a ribonucleoside 5'-triphosphate + H2O = a ribonucleoside 5'-phosphate + diphosphate + H(+). The enzyme catalyses a 2'-deoxyribonucleoside 5'-triphosphate + H2O = a 2'-deoxyribonucleoside 5'-phosphate + diphosphate + H(+). It catalyses the reaction dUTP + H2O = dUMP + diphosphate + H(+). It carries out the reaction dTTP + H2O = dTMP + diphosphate + H(+). The catalysed reaction is dCTP + H2O = dCMP + diphosphate + H(+). Functionally, catalyzes the hydrolysis of nucleoside triphosphates, with a preference for pyrimidine deoxynucleoside triphosphates (dUTP, dTTP and dCTP). The chain is Nucleoside triphosphatase NudI from Salmonella agona (strain SL483).